The chain runs to 157 residues: Protein-export protein SecB (157 aa).

The protein belongs to the SecB family. In terms of assembly, homotetramer, a dimer of dimers. One homotetramer interacts with 1 SecA dimer.

It is found in the cytoplasm. In terms of biological role, one of the proteins required for the normal export of preproteins out of the cell cytoplasm. It is a molecular chaperone that binds to a subset of precursor proteins, maintaining them in a translocation-competent state. It also specifically binds to its receptor SecA. The sequence is that of Protein-export protein SecB from Dichelobacter nodosus (strain VCS1703A).